The primary structure comprises 476 residues: Aspartyl/glutamyl-tRNA(Asn/Gln) amidotransferase subunit B (476 aa).

Belongs to the GatB/GatE family. GatB subfamily. Heterotrimer of A, B and C subunits.

The enzyme catalyses L-glutamyl-tRNA(Gln) + L-glutamine + ATP + H2O = L-glutaminyl-tRNA(Gln) + L-glutamate + ADP + phosphate + H(+). It carries out the reaction L-aspartyl-tRNA(Asn) + L-glutamine + ATP + H2O = L-asparaginyl-tRNA(Asn) + L-glutamate + ADP + phosphate + 2 H(+). In terms of biological role, allows the formation of correctly charged Asn-tRNA(Asn) or Gln-tRNA(Gln) through the transamidation of misacylated Asp-tRNA(Asn) or Glu-tRNA(Gln) in organisms which lack either or both of asparaginyl-tRNA or glutaminyl-tRNA synthetases. The reaction takes place in the presence of glutamine and ATP through an activated phospho-Asp-tRNA(Asn) or phospho-Glu-tRNA(Gln). This Clostridium botulinum (strain Loch Maree / Type A3) protein is Aspartyl/glutamyl-tRNA(Asn/Gln) amidotransferase subunit B.